We begin with the raw amino-acid sequence, 740 residues long: DNA polymerase iota (740 aa).

Positions 1-21 (MEKLGVEPEEEGGGDDDEEDA) are disordered. Residues 7 to 21 (EPEEEGGGDDDEEDA) are compositionally biased toward acidic residues. The region spanning 55–268 (IVHVDLDCFY…NHIKEIPGIG (214 aa)) is the UmuC domain. The Mg(2+) site is built by aspartate 59 and leucine 60. The Mn(2+) site is built by aspartate 59 and leucine 60. The a 2'-deoxyribonucleoside 5'-triphosphate site is built by tyrosine 64 and arginine 96. Aspartate 151 contacts Mg(2+). Aspartate 151 contributes to the Mn(2+) binding site. Residue glutamate 152 is the Proton acceptor of the active site. 2 DNA-binding regions span residues 249 to 314 (ESCQ…FGED) and 325 to 439 (QSFS…CNLK). The Ubiquitin-binding 1 (UBM1) motif lies at 527-544 (VDQEVFKQLPVDIQEEIL). 2 disordered regions span residues 581-615 (PINP…SSYM) and 671-704 (NHTT…KITF). The span at 605–615 (SGFNSSSSSYM) shows a compositional bias: low complexity. Residues 672–702 (HTTDSHKQTVATDSHEGLTENREPDSVDEKI) are compositionally biased toward basic and acidic residues. Positions 708–725 (IDPQVFYELPEAVQKELL) match the Ubiquitin-binding 2 (UBM2) motif.

This sequence belongs to the DNA polymerase type-Y family. As to quaternary structure, interacts with POLH. Interacts with REV1. Interacts with ubiquitin. Requires Mg(2+) as cofactor. Mn(2+) serves as cofactor. Monoubiquitinated. Protein monoubiquitination prevents POLI binding to ubiquitin via the ubiquitin-binding motif 1 and ubiquitin-binding motif 2. As to expression, ubiquitous. Highly expressed in testis.

The protein localises to the nucleus. It catalyses the reaction DNA(n) + a 2'-deoxyribonucleoside 5'-triphosphate = DNA(n+1) + diphosphate. Error-prone DNA polymerase specifically involved in DNA repair. Plays an important role in translesion synthesis, where the normal high-fidelity DNA polymerases cannot proceed and DNA synthesis stalls. Favors Hoogsteen base-pairing in the active site. Inserts the correct base with high-fidelity opposite an adenosine template. Exhibits low fidelity and efficiency opposite a thymidine template, where it will preferentially insert guanosine. May play a role in hypermutation of immunoglobulin genes. Forms a Schiff base with 5'-deoxyribose phosphate at abasic sites, but may not have lyase activity. This Homo sapiens (Human) protein is DNA polymerase iota (POLI).